The sequence spans 409 residues: 5-aminolevulinate synthase (409 aa).

Residues R21 and S136 each contribute to the substrate site. Pyridoxal 5'-phosphate contacts are provided by S188, H216, and T244. The active site involves K247. N6-(pyridoxal phosphate)lysine is present on K247. T276 and T277 together coordinate pyridoxal 5'-phosphate. T362 lines the substrate pocket.

This sequence belongs to the class-II pyridoxal-phosphate-dependent aminotransferase family. Homodimer. Pyridoxal 5'-phosphate serves as cofactor.

It catalyses the reaction succinyl-CoA + glycine + H(+) = 5-aminolevulinate + CO2 + CoA. The protein operates within porphyrin-containing compound metabolism; protoporphyrin-IX biosynthesis; 5-aminolevulinate from glycine: step 1/1. This is 5-aminolevulinate synthase (hemA) from Bradyrhizobium diazoefficiens (strain JCM 10833 / BCRC 13528 / IAM 13628 / NBRC 14792 / USDA 110).